The sequence spans 292 residues: Acetylglutamate kinase (292 aa).

Residues 64-65, Arg-86, and Asn-190 contribute to the substrate site; that span reads GG.

It belongs to the acetylglutamate kinase family. ArgB subfamily.

It is found in the cytoplasm. The enzyme catalyses N-acetyl-L-glutamate + ATP = N-acetyl-L-glutamyl 5-phosphate + ADP. The protein operates within amino-acid biosynthesis; L-arginine biosynthesis; N(2)-acetyl-L-ornithine from L-glutamate: step 2/4. Functionally, catalyzes the ATP-dependent phosphorylation of N-acetyl-L-glutamate. The chain is Acetylglutamate kinase from Leptospira biflexa serovar Patoc (strain Patoc 1 / Ames).